The sequence spans 488 residues: NADH-ubiquinone oxidoreductase chain 2 (488 aa).

The next 14 membrane-spanning stretches (helical) occupy residues 11–31, 38–58, 74–94, 106–126, 129–149, 162–182, 211–231, 239–259, 271–291, 299–319, 331–351, 376–396, 412–434, and 460–480; these read MIKYSIYLVPLIIMILLSISI, MMLLFKSLKLTIILILVLLTI, ELITFVEYILLVVSYLIISMF, ITEEALILMYSSLIGMLISME, NLITLFLSLEITSICFYILAL, LKYYIIGGIASTIILLGIVSI, IALIVLGLIIKLGVAPFHGWL, GMLMTFYLTITQKIVTIIVLI, IEVINKGLLVLILVTLIVGTV, VIRFIAYSAIVNSALLILFFV, IYYLINYIIGLAVLINIIIGV, IGISLIIVLIYLAGLPPFTNF, IYITMIIFFLTVGIMIYYMNVVK, and IVGGIIWIIISQIYLDEIISI.

It belongs to the complex I subunit 2 family.

It is found in the mitochondrion inner membrane. It carries out the reaction a ubiquinone + NADH + 5 H(+)(in) = a ubiquinol + NAD(+) + 4 H(+)(out). Functionally, core subunit of the mitochondrial membrane respiratory chain NADH dehydrogenase (Complex I) that is believed to belong to the minimal assembly required for catalysis. Complex I functions in the transfer of electrons from NADH to the respiratory chain. The immediate electron acceptor for the enzyme is believed to be ubiquinone. This chain is NADH-ubiquinone oxidoreductase chain 2 (nad2), found in Dictyostelium discoideum (Social amoeba).